A 512-amino-acid polypeptide reads, in one-letter code: MEKFKRYLETFRSEQKYFLYPLLFQEYIYALGHDHGLNGPIPYESIENLGYGDKSSSLIVKRLIIRMHKQNHFLISCNENDFQQNRLLGRKNNLDSKIISEAFSIIVEIPFSFQLVSCLEKKREIAKSHNLRSIHSIFPFFEDNIFYLYHISDVLIPYPIHPEILVQTLRYWIQDVPSLHLLRIFLYEYCHSGSFISKKKFFSFSKKENERLSLFIYNSYVYEWESIFLFIRKQSSHLRSISWEALLERVHFYGKIEHLVVVLCNDFQKALWVFKDCFMHYVRYQGKSLLISKGTDLLMKKWKYHFIYLWQCNFHLWSQPHRIHINQLDNRSFHFLGYASSVRINLSVVKSQILENSFLMETSVKKFETTVPIISLIGSLSKEKFCNLSGHPTSKAIWADSSDSDIMERFGRVCRNLSHYYSGCSKKQILYRIKYILRLSCARTLARKHKSTVRVFLKRLGSGFLKEFLAEEEQVLSFFFPRSYPTSYRSNKDKERIWYLDITHTNDLANHE.

The protein belongs to the intron maturase 2 family. MatK subfamily.

The protein localises to the plastid. The protein resides in the chloroplast. In terms of biological role, usually encoded in the trnK tRNA gene intron. Probably assists in splicing its own and other chloroplast group II introns. The chain is Maturase K from Piper cenocladum (Ant piper).